A 644-amino-acid polypeptide reads, in one-letter code: SPbeta prophage-derived uncharacterized protein YomE (644 aa).

This Bacillus subtilis (strain 168) protein is SPbeta prophage-derived uncharacterized protein YomE (yomE).